Reading from the N-terminus, the 423-residue chain is Cell adhesion molecule CEACAM16 (423 aa).

Residues Met-1–Ala-22 form the signal peptide. Residue Asn-38 is glycosylated (N-linked (GlcNAc...) asparagine). The disordered stretch occupies residues Glu-77–Asp-96. Basic and acidic residues predominate over residues Thr-84–Leu-95. Ig-like C2-type domains lie at Pro-134–Thr-219 and Pro-224–Val-310. Residues Cys-155 and Cys-202 are joined by a disulfide bond. N-linked (GlcNAc...) asparagine glycosylation occurs at Asn-217. Cysteines 253 and 294 form a disulfide.

The protein belongs to the immunoglobulin superfamily. CEA family. Homooligomer; can for homodimers and homotetramers. Interacts with TECTA and TECTB.

It is found in the secreted. In terms of biological role, required for proper hearing, plays a role in maintaining the integrity of the tectorial membrane. The protein is Cell adhesion molecule CEACAM16 of Rattus norvegicus (Rat).